Consider the following 262-residue polypeptide: Sulfur carrier protein FdhD (262 aa).

The Cysteine persulfide intermediate role is filled by Cys-107.

It belongs to the FdhD family.

The protein localises to the cytoplasm. In terms of biological role, required for formate dehydrogenase (FDH) activity. Acts as a sulfur carrier protein that transfers sulfur from IscS to the molybdenum cofactor prior to its insertion into FDH. In Bacillus subtilis (strain 168), this protein is Sulfur carrier protein FdhD.